The following is a 291-amino-acid chain: Taste receptor type 2 member 16 (291 aa).

Position 1 (Met-1) is a topological domain, extracellular. The helical transmembrane segment at 2-22 (IPIQLTVFFMIIYVLESLTII) threads the bilayer. The Cytoplasmic segment spans residues 23–41 (VQSSLIVAVLGREWLQVRR). Residues 42–62 (LMPVDMILISLGISRFCLQWA) traverse the membrane as a helical segment. Topologically, residues 63–84 (SMLNNFCSYFNLNYVLCNLTIT) are extracellular. An N-linked (GlcNAc...) asparagine glycan is attached at Asn-80. Residues 85-105 (WEFFNILTFWLNSLLTVFYCI) traverse the membrane as a helical segment. Residues 106–125 (KVSSFTHHIFLWLRWRILRL) are Cytoplasmic-facing. The helical transmembrane segment at 126–146 (FPWILLGSLMITCVTIIPSAI) threads the bilayer. The Extracellular segment spans residues 147–182 (GNYIQIQLLTMEHLPRNSTVTDKLENFHQYQFQAHT). Asn-163 is a glycosylation site (N-linked (GlcNAc...) asparagine). A helical transmembrane segment spans residues 183–203 (VALVIPFILFLASTIFLMASL). The Cytoplasmic segment spans residues 204–228 (TKQIQHHSTGHCNPSMKARFTALRS). Residues 229–249 (LAVLFIVFTSYFLTILITIIG) form a helical membrane-spanning segment. Residues 250–257 (TLFDKRCW) lie on the Extracellular side of the membrane. Residues 258 to 278 (LWVWEAFVYAFILMHSTSLML) traverse the membrane as a helical segment. Residues 279-291 (SSPTLKRILKGKC) lie on the Cytoplasmic side of the membrane.

The protein belongs to the G-protein coupled receptor T2R family. As to quaternary structure, interacts with RTP3 and RTP4. As to expression, expressed in a subset of gustducin-positive taste receptor cells of the tongue. Expressed in circumvallate papillae and testis.

It localises to the cell membrane. Gustducin-coupled receptor implicated in the perception of bitter compounds in the oral cavity and the gastrointestinal tract. Signals through PLCB2 and the calcium-regulated cation channel TRPM5. The chain is Taste receptor type 2 member 16 (TAS2R16) from Homo sapiens (Human).